The primary structure comprises 380 residues: Cytochrome b (380 aa).

4 helical membrane passes run 34 to 54, 78 to 99, 114 to 134, and 179 to 199; these read FGSLLGICLVTQILTGLLLAM, WLIRNLHANGASLFFICIYLHI, WNTGVILLLTLMATAFVGYVL, and FFALHFLLPFMIAGLTLIHLT. Heme b contacts are provided by His-84 and His-98. Positions 183 and 197 each coordinate heme b. Residue His-202 coordinates a ubiquinone. Transmembrane regions (helical) follow at residues 227–247, 289–309, 321–341, and 348–368; these read LKDFLGFALMLFLLTALALFT, LGGVLALAASVLVLLLVPFLH, LSQTLFWILVSNLFILTWIGS, and FITIGQLASITYFTIILILFP.

It belongs to the cytochrome b family. As to quaternary structure, the cytochrome bc1 complex contains 11 subunits: 3 respiratory subunits (MT-CYB, CYC1 and UQCRFS1), 2 core proteins (UQCRC1 and UQCRC2) and 6 low-molecular weight proteins (UQCRH/QCR6, UQCRB/QCR7, UQCRQ/QCR8, UQCR10/QCR9, UQCR11/QCR10 and a cleavage product of UQCRFS1). This cytochrome bc1 complex then forms a dimer. Heme b serves as cofactor.

The protein localises to the mitochondrion inner membrane. Functionally, component of the ubiquinol-cytochrome c reductase complex (complex III or cytochrome b-c1 complex) that is part of the mitochondrial respiratory chain. The b-c1 complex mediates electron transfer from ubiquinol to cytochrome c. Contributes to the generation of a proton gradient across the mitochondrial membrane that is then used for ATP synthesis. The protein is Cytochrome b (MT-CYB) of Coracias caudatus (Lilac-breasted roller).